Consider the following 285-residue polypeptide: 2-dehydro-3-deoxyphosphooctonate aldolase (285 aa).

It belongs to the KdsA family.

It localises to the cytoplasm. The enzyme catalyses D-arabinose 5-phosphate + phosphoenolpyruvate + H2O = 3-deoxy-alpha-D-manno-2-octulosonate-8-phosphate + phosphate. Its pathway is carbohydrate biosynthesis; 3-deoxy-D-manno-octulosonate biosynthesis; 3-deoxy-D-manno-octulosonate from D-ribulose 5-phosphate: step 2/3. It participates in bacterial outer membrane biogenesis; lipopolysaccharide biosynthesis. This is 2-dehydro-3-deoxyphosphooctonate aldolase from Methylibium petroleiphilum (strain ATCC BAA-1232 / LMG 22953 / PM1).